The primary structure comprises 344 residues: Ferrochelatase (344 aa).

Fe cation contacts are provided by His214 and Glu295.

This sequence belongs to the ferrochelatase family.

It is found in the cytoplasm. It carries out the reaction heme b + 2 H(+) = protoporphyrin IX + Fe(2+). The protein operates within porphyrin-containing compound metabolism; protoheme biosynthesis; protoheme from protoporphyrin-IX: step 1/1. Catalyzes the ferrous insertion into protoporphyrin IX. The chain is Ferrochelatase from Rhizobium etli (strain ATCC 51251 / DSM 11541 / JCM 21823 / NBRC 15573 / CFN 42).